The following is a 79-amino-acid chain: Defensin-like protein 3 (79 aa).

The N-terminal stretch at M1–A29 is a signal peptide. 4 disulfides stabilise this stretch: C32-C79, C43-C64, C49-C73, and C53-C75.

The protein belongs to the DEFL family.

The protein localises to the secreted. Its function is as follows. Possesses antifungal activity sensitive to inorganic cations. The polypeptide is Defensin-like protein 3 (AFP3) (Raphanus sativus (Radish)).